The following is an 800-amino-acid chain: DEP domain-containing protein 1A (800 aa).

A DEP domain is found at 24-108 (FRAGMPLKKH…DNSQLYRFPS (85 aa)). Disordered regions lie at residues 147–173 (ETLE…RSRE), 306–326 (SQPG…AKNP), and 459–485 (INTS…ARAR). Residues 281–321 (PLLTYQYYELFVNILVMCGYITTPKSQPGKRKNQEEPNCPQ) enclose the Rho-GAP domain. Positions 459–468 (INTSGSSVSS) are enriched in low complexity.

The protein is DEP domain-containing protein 1A (depdc1a) of Danio rerio (Zebrafish).